The primary structure comprises 54 residues: Potassium channel toxin alpha-KTx 14.x (54 aa).

An N-terminal signal peptide occupies residues 1–23 (MKIFFAILLILAVCSMAIWTVNG). Cystine bridges form between C30–C46, C36–C51, and C40–C53.

The protein belongs to the short scorpion toxin superfamily. Potassium channel inhibitor family. Alpha-KTx 14 subfamily. As to expression, expressed by the venom gland.

Its subcellular location is the secreted. In terms of biological role, potassium channels inhibitor. The protein is Potassium channel toxin alpha-KTx 14.x of Olivierus martensii (Manchurian scorpion).